The primary structure comprises 101 residues: NAD(P)H-quinone oxidoreductase subunit 4L, chloroplastic (101 aa).

3 consecutive transmembrane segments (helical) span residues 2–22 (MLEH…YGLI), 32–52 (MCLE…SDFF), and 61–81 (IFSI…LAIV).

The protein belongs to the complex I subunit 4L family. In terms of assembly, NDH is composed of at least 16 different subunits, 5 of which are encoded in the nucleus.

The protein localises to the plastid. It localises to the chloroplast thylakoid membrane. It catalyses the reaction a plastoquinone + NADH + (n+1) H(+)(in) = a plastoquinol + NAD(+) + n H(+)(out). The enzyme catalyses a plastoquinone + NADPH + (n+1) H(+)(in) = a plastoquinol + NADP(+) + n H(+)(out). Its function is as follows. NDH shuttles electrons from NAD(P)H:plastoquinone, via FMN and iron-sulfur (Fe-S) centers, to quinones in the photosynthetic chain and possibly in a chloroplast respiratory chain. The immediate electron acceptor for the enzyme in this species is believed to be plastoquinone. Couples the redox reaction to proton translocation, and thus conserves the redox energy in a proton gradient. The protein is NAD(P)H-quinone oxidoreductase subunit 4L, chloroplastic of Guizotia abyssinica (Niger).